A 240-amino-acid polypeptide reads, in one-letter code: Transcriptional regulatory protein ResD (240 aa).

Residues 8–121 enclose the Response regulatory domain; sequence KILVVDDEAR…EVVLRVKALL (114 aa). Asp57 carries the post-translational modification 4-aspartylphosphate. Residues 137 to 237 constitute a DNA-binding region (ompR/PhoB-type); sequence KNVLVFSHLS…VWGVGYKFEV (101 aa).

In terms of assembly, interacts with the RNA polymerase core. Post-translationally, phosphorylated by ResE.

The protein localises to the cytoplasm. Functionally, member of the two-component regulatory system ResD/ResE. Required for the expression of resA, ctaA, qcrABC and fnr; activation role in global regulation of aerobic and anaerobic respiration. The polypeptide is Transcriptional regulatory protein ResD (resD) (Bacillus subtilis (strain 168)).